Reading from the N-terminus, the 1405-residue chain is DNA-directed RNA polymerase subunit beta' (1405 aa).

Positions 70, 72, 85, and 88 each coordinate Zn(2+). Positions 460, 462, and 464 each coordinate Mg(2+). The Zn(2+) site is built by C815, C889, C896, and C899. Residues 1363–1388 form a disordered region; sequence LAHHAERRRRREDPESTANPSAFDVE.

It belongs to the RNA polymerase beta' chain family. In terms of assembly, the RNAP catalytic core consists of 2 alpha, 1 beta, 1 beta' and 1 omega subunit. When a sigma factor is associated with the core the holoenzyme is formed, which can initiate transcription. It depends on Mg(2+) as a cofactor. Requires Zn(2+) as cofactor.

The enzyme catalyses RNA(n) + a ribonucleoside 5'-triphosphate = RNA(n+1) + diphosphate. In terms of biological role, DNA-dependent RNA polymerase catalyzes the transcription of DNA into RNA using the four ribonucleoside triphosphates as substrates. In Chromohalobacter salexigens (strain ATCC BAA-138 / DSM 3043 / CIP 106854 / NCIMB 13768 / 1H11), this protein is DNA-directed RNA polymerase subunit beta'.